The sequence spans 145 residues: Cytochrome c2 (145 aa).

A signal peptide spans 1-21; sequence MKFQVKALAAIAAFAALPALA. Gln22 is subject to Pyrrolidone carboxylic acid. Heme c-binding residues include Cys36, Cys39, His40, and Met121.

The protein belongs to the cytochrome c family. In terms of processing, binds 1 heme c group covalently per subunit.

It is found in the periplasm. Cytochrome c2 is found mainly in purple, non-sulfur, photosynthetic bacteria where it functions as the electron donor to the oxidized bacteriochlorophyll in the photophosphorylation pathway. However, it may also have a role in the respiratory chain and is found in some non-photosynthetic bacteria. In Cereibacter sphaeroides (strain ATCC 17023 / DSM 158 / JCM 6121 / CCUG 31486 / LMG 2827 / NBRC 12203 / NCIMB 8253 / ATH 2.4.1.) (Rhodobacter sphaeroides), this protein is Cytochrome c2 (cycA).